We begin with the raw amino-acid sequence, 134 residues long: Small ribosomal subunit protein uS8c (134 aa).

It belongs to the universal ribosomal protein uS8 family. In terms of assembly, part of the 30S ribosomal subunit.

The protein localises to the plastid. The protein resides in the chloroplast. One of the primary rRNA binding proteins, it binds directly to 16S rRNA central domain where it helps coordinate assembly of the platform of the 30S subunit. The chain is Small ribosomal subunit protein uS8c (rps8) from Cucumis sativus (Cucumber).